Consider the following 760-residue polypeptide: Xaa-Pro dipeptidyl-peptidase (760 aa).

Active-site charge relay system residues include Ser349, Asp469, and His499.

It belongs to the peptidase S15 family. Homodimer.

Its subcellular location is the cytoplasm. It carries out the reaction Hydrolyzes Xaa-Pro-|- bonds to release unblocked, N-terminal dipeptides from substrates including Ala-Pro-|-p-nitroanilide and (sequentially) Tyr-Pro-|-Phe-Pro-|-Gly-Pro-|-Ile.. Its function is as follows. Removes N-terminal dipeptides sequentially from polypeptides having unsubstituted N-termini provided that the penultimate residue is proline. This is Xaa-Pro dipeptidyl-peptidase from Streptococcus pyogenes serotype M49 (strain NZ131).